The primary structure comprises 285 residues: Pantothenate synthetase (285 aa).

30–37 (MGNLHDGH) contributes to the ATP binding site. Histidine 37 functions as the Proton donor in the catalytic mechanism. Glutamine 61 contributes to the (R)-pantoate binding site. Glutamine 61 contacts beta-alanine. 149–152 (GEKD) contacts ATP. (R)-pantoate is bound at residue glutamine 155. ATP contacts are provided by residues isoleucine 178 and 186-189 (FSSR).

Belongs to the pantothenate synthetase family. In terms of assembly, homodimer.

It is found in the cytoplasm. The catalysed reaction is (R)-pantoate + beta-alanine + ATP = (R)-pantothenate + AMP + diphosphate + H(+). Its pathway is cofactor biosynthesis; (R)-pantothenate biosynthesis; (R)-pantothenate from (R)-pantoate and beta-alanine: step 1/1. Catalyzes the condensation of pantoate with beta-alanine in an ATP-dependent reaction via a pantoyl-adenylate intermediate. This Buchnera aphidicola subsp. Schizaphis graminum (strain Sg) protein is Pantothenate synthetase.